A 100-amino-acid chain; its full sequence is Probable DNA-binding protein HU (100 aa).

It belongs to the bacterial histone-like protein family.

Its function is as follows. Histone-like DNA-binding protein which is capable of wrapping DNA to stabilize it, and thus to prevent its denaturation under extreme environmental conditions. The polypeptide is Probable DNA-binding protein HU (hup) (Chlamydia pneumoniae (Chlamydophila pneumoniae)).